Consider the following 548-residue polypeptide: Telomerase Cajal body protein 1 (548 aa).

Positions 1–142 (MKTLETQPLA…SGEPAAEDEG (142 aa)) are disordered. The segment covering 15–31 (PSDQDPAPAHPSPHASP) has biased composition (low complexity). Residues serine 26, serine 30, and serine 54 each carry the phosphoserine modification. Serine 64 is subject to Phosphoserine; by ATM. 4 positions are modified to phosphoserine: serine 85, serine 90, serine 112, and serine 114. WD repeat units follow at residues 167 to 206 (QPEN…YHEG), 222 to 267 (EGDT…LRAS), 272 to 313 (NHLD…RDCE), 323 to 364 (GQSG…ALLG), 365 to 405 (GHQG…YPLW), and 411 to 450 (VTTN…NDGK). Residue threonine 489 is modified to Phosphothreonine. Serine 491 is subject to Phosphoserine. Residues 526–548 (SIPDDHQGEKGQGGTEGGVGELI) are disordered. Over residues 535-548 (KGQGGTEGGVGELI) the composition is skewed to gly residues.

It belongs to the TCAB1 family. Component of the telomerase holoenzyme complex composed of one molecule of TERT, one molecule of WRAP53/TCAB1, two molecules of H/ACA ribonucleoprotein complex subunits DKC1, NOP10, NHP2 and GAR1, and a telomerase RNA template component (TERC). The telomerase holoenzyme complex is associated with TEP1, SMG6/EST1A and POT1. Interacts with the chaperonin-containing T-complex (TRiC) complex; which mediates the folding of WRAP53/TCAB1. Interacts with COIL. Interacts with SMN1. Interacts with RNF8. Interacts with histone H2AX. Phosphorylated at Ser-64 by ATM in response to DNA damage, promoting its interaction with histone H2AX and localization to sites of DNA double-strand breaks. As to expression, expressed in all tissues and cell lines examined.

The protein localises to the nucleus. Its subcellular location is the cajal body. It is found in the chromosome. It localises to the telomere. Its function is as follows. RNA chaperone that plays a key role in telomere maintenance and RNA localization to Cajal bodies. Specifically recognizes and binds the Cajal body box (CAB box) present in both small Cajal body RNAs (scaRNAs) and telomerase RNA template component (TERC). Essential component of the telomerase holoenzyme complex, a ribonucleoprotein complex essential for the replication of chromosome termini that elongates telomeres in most eukaryotes. In the telomerase holoenzyme complex, required to stimulate the catalytic activity of the complex. Acts by specifically binding the CAB box of the TERC RNA and controlling the folding of the CR4/CR5 region of the TERC RNA, a critical step for telomerase activity. In addition, also controls telomerase holoenzyme complex localization to Cajal body. During S phase, required for delivery of TERC to telomeres during S phase and for telomerase activity. In addition to its role in telomere maintenance, also required for Cajal body formation, probably by mediating localization of scaRNAs to Cajal bodies. Also plays a role in DNA repair: phosphorylated by ATM in response to DNA damage and relocalizes to sites of DNA double-strand breaks to promote the repair of DNA double-strand breaks. Acts by recruiting the ubiquitin ligase RNF8 to DNA breaks and promote both homologous recombination (HR) and non-homologous end joining (NHEJ). This is Telomerase Cajal body protein 1 from Homo sapiens (Human).